The chain runs to 514 residues: 2,3-bisphosphoglycerate-independent phosphoglycerate mutase (514 aa).

Aspartate 14 and serine 64 together coordinate Mn(2+). Catalysis depends on serine 64, which acts as the Phosphoserine intermediate. Residues histidine 125, 155 to 156 (RD), arginine 187, arginine 193, 263 to 266 (RADR), and lysine 336 each bind substrate. Mn(2+) contacts are provided by aspartate 403, histidine 407, aspartate 444, histidine 445, and histidine 463.

This sequence belongs to the BPG-independent phosphoglycerate mutase family. Monomer. Mn(2+) is required as a cofactor.

It carries out the reaction (2R)-2-phosphoglycerate = (2R)-3-phosphoglycerate. It participates in carbohydrate degradation; glycolysis; pyruvate from D-glyceraldehyde 3-phosphate: step 3/5. Its function is as follows. Catalyzes the interconversion of 2-phosphoglycerate and 3-phosphoglycerate. The chain is 2,3-bisphosphoglycerate-independent phosphoglycerate mutase from Shewanella sp. (strain MR-7).